Reading from the N-terminus, the 439-residue chain is Serine/threonine-protein kinase 2 (439 aa).

The Protein kinase domain maps to Asn-87 to Asn-439. Residues Ile-93–Val-101 and Lys-117 each bind ATP. Asp-307 (proton acceptor) is an active-site residue.

This sequence belongs to the protein kinase superfamily. Ser/Thr protein kinase family. Poxviruses subfamily. Phosphorylated in vivo. Autophosphorylated in vitro.

It localises to the host endoplasmic reticulum. Its subcellular location is the host endoplasmic reticulum-Golgi intermediate compartment. The catalysed reaction is L-seryl-[protein] + ATP = O-phospho-L-seryl-[protein] + ADP + H(+). The enzyme catalyses L-threonyl-[protein] + ATP = O-phospho-L-threonyl-[protein] + ADP + H(+). Essential serine-protein kinase involved in the early stage of virion morphogenesis. This Homo sapiens (Human) protein is Serine/threonine-protein kinase 2 (OPG054).